We begin with the raw amino-acid sequence, 60 residues long: Large ribosomal subunit protein uL30 (60 aa).

The protein belongs to the universal ribosomal protein uL30 family. As to quaternary structure, part of the 50S ribosomal subunit.

The protein is Large ribosomal subunit protein uL30 of Ralstonia pickettii (strain 12J).